Here is a 646-residue protein sequence, read N- to C-terminus: Threonine--tRNA ligase (646 aa).

In terms of domain architecture, TGS spans 1–61; it reads MIKITFPDGS…NEDADFVLYK (61 aa). The catalytic stretch occupies residues 242 to 541; the sequence is DHRKIGKEMQ…LIEHTAGKFP (300 aa). Zn(2+)-binding residues include Cys-337, His-388, and His-518.

It belongs to the class-II aminoacyl-tRNA synthetase family. As to quaternary structure, homodimer. Requires Zn(2+) as cofactor.

The protein localises to the cytoplasm. The enzyme catalyses tRNA(Thr) + L-threonine + ATP = L-threonyl-tRNA(Thr) + AMP + diphosphate + H(+). In terms of biological role, catalyzes the attachment of threonine to tRNA(Thr) in a two-step reaction: L-threonine is first activated by ATP to form Thr-AMP and then transferred to the acceptor end of tRNA(Thr). Also edits incorrectly charged L-seryl-tRNA(Thr). This is Threonine--tRNA ligase from Bacteroides thetaiotaomicron (strain ATCC 29148 / DSM 2079 / JCM 5827 / CCUG 10774 / NCTC 10582 / VPI-5482 / E50).